A 179-amino-acid polypeptide reads, in one-letter code: Isopentenyl-diphosphate Delta-isomerase (179 aa).

Mn(2+) is bound by residues H24 and H30. Residues 28 to 160 enclose the Nudix hydrolase domain; sequence LLHRAFSIFI…PEKFTVWFLT (133 aa). Residue C65 is part of the active site. H67 is a Mn(2+) binding site. E85 serves as a coordination point for Mg(2+). Residues E110 and E112 each contribute to the Mn(2+) site. E112 is a catalytic residue.

The protein belongs to the IPP isomerase type 1 family. In terms of assembly, homodimer. It depends on Mg(2+) as a cofactor. Mn(2+) is required as a cofactor.

The protein resides in the cytoplasm. The enzyme catalyses isopentenyl diphosphate = dimethylallyl diphosphate. The protein operates within isoprenoid biosynthesis; dimethylallyl diphosphate biosynthesis; dimethylallyl diphosphate from isopentenyl diphosphate: step 1/1. Its function is as follows. Catalyzes the 1,3-allylic rearrangement of the homoallylic substrate isopentenyl (IPP) to its highly electrophilic allylic isomer, dimethylallyl diphosphate (DMAPP). The sequence is that of Isopentenyl-diphosphate Delta-isomerase from Serratia proteamaculans (strain 568).